The chain runs to 227 residues: MNSIEFSLLDRTTPNSFISTTSNDLSNWSRLSSLWPLLYGTSCCFIEFASLIGSRFDFDRYGLVPRSSPRQADLILTAGTVTMKMAPSLVRLYEQMPEPKYVIAMGACTITGGMFSTDSYSTVRGVDKLIPVDVYLPGCPPKPEAVIDAITKLRKKISREIYEDRIRLQRENRSFTFTTNHKFRVVCSTNTGNYDQGLLYQPPSTSEIPPETFFKYKSSVSSPEFIN.

[4Fe-4S] cluster contacts are provided by cysteine 43, cysteine 44, cysteine 108, and cysteine 139.

The protein belongs to the complex I 20 kDa subunit family. NDH is composed of at least 16 different subunits, 5 of which are encoded in the nucleus. [4Fe-4S] cluster is required as a cofactor.

The protein resides in the plastid. It localises to the chloroplast thylakoid membrane. The enzyme catalyses a plastoquinone + NADH + (n+1) H(+)(in) = a plastoquinol + NAD(+) + n H(+)(out). The catalysed reaction is a plastoquinone + NADPH + (n+1) H(+)(in) = a plastoquinol + NADP(+) + n H(+)(out). Its function is as follows. NDH shuttles electrons from NAD(P)H:plastoquinone, via FMN and iron-sulfur (Fe-S) centers, to quinones in the photosynthetic chain and possibly in a chloroplast respiratory chain. The immediate electron acceptor for the enzyme in this species is believed to be plastoquinone. Couples the redox reaction to proton translocation, and thus conserves the redox energy in a proton gradient. The polypeptide is NAD(P)H-quinone oxidoreductase subunit K, chloroplastic (Citrus sinensis (Sweet orange)).